A 731-amino-acid chain; its full sequence is Actin filament-associated protein 1 (731 aa).

Met-1 carries the N-acetylmethionine modification. Residues 56-90 (NNLPAPPQMPLPEIPQPWLPPDSGPPPLPTSSLPE) are disordered. The span at 59-84 (PAPPQMPLPEIPQPWLPPDSGPPPLP) shows a compositional bias: pro residues. Positions 70–73 (PQPW) match the SH3-binding motif. Positions 93-96 (YEEA) match the SH2-binding 1 motif. A disordered region spans residues 118–139 (SSSYESYDEEEEDGKGKKTRHQ). The PH 1 domain occupies 152–248 (DAKICAFLLR…WLKVIKEAYS (97 aa)). Residues 252–318 (GPVDPECSPP…SKSEAKGTVS (67 aa)) form a disordered region. Positions 271-284 (AELEKKLSSERPSS) are enriched in basic and acidic residues. Phosphoserine is present on residues Ser-283 and Ser-284. The PH 2 domain occupies 348 to 442 (DVPTCGYLNV…WIGILLAETG (95 aa)). An SH2-binding 2 motif is present at residues 452 to 457 (YDYIDV). Residues 513 to 544 (KNKKPPASSNGVPVKGKAPSSQQKKVETAGGV) are disordered. Position 549 is a phosphoserine (Ser-549). Residues 558–649 (KNRVEADAKR…VKESLKKALA (92 aa)) are a coiled coil. Positions 595–638 (DLRAAIEVNAGRKTQAALEDKLKRLEEECKQREAERVSLELELT) are interaction with F-actin. Residues 658–731 (IEPRSGTSSP…AKEWELKNGT (74 aa)) are disordered. 3 positions are modified to phosphoserine: Ser-665, Ser-666, and Ser-669. Thr-676 carries the phosphothreonine modification. Residues 678 to 687 (ENSPISSCDT) show a composition bias toward polar residues. 2 positions are modified to phosphoserine: Ser-680 and Ser-688. Positions 721 to 731 (KAKEWELKNGT) are enriched in basic and acidic residues.

As to quaternary structure, monomer and homomultimer. Interacts via its C-terminus with F-actin; probably involving AFAP1 multimers. Interacts with activated SRC SH3-SH2 domains. Interacts via its PH 1 domain with PRKCA, PRKCB and PRKCI. Post-translationally, phosphorylated on tyrosine residues by SRC.

It localises to the cytoplasm. It is found in the cytoskeleton. The protein resides in the stress fiber. Can cross-link actin filaments into both network and bundle structures. May modulate changes in actin filament integrity and induce lamellipodia formation. May function as an adapter molecule that links other proteins, such as SRC and PKC to the actin cytoskeleton. The sequence is that of Actin filament-associated protein 1 (Afap1) from Mus musculus (Mouse).